The sequence spans 601 residues: DNA ligase (601 aa).

Asp258 is a binding site for ATP. Residue Lys260 is the N6-AMP-lysine intermediate of the active site. Positions 265, 280, 310, 350, 427, and 433 each coordinate ATP. The tract at residues 568–601 (DKSPEDATTTDEILEMYNKQPKKKIESPPIDESV) is disordered.

It belongs to the ATP-dependent DNA ligase family. It depends on Mg(2+) as a cofactor.

It carries out the reaction ATP + (deoxyribonucleotide)n-3'-hydroxyl + 5'-phospho-(deoxyribonucleotide)m = (deoxyribonucleotide)n+m + AMP + diphosphate.. In terms of biological role, DNA ligase that seals nicks in double-stranded DNA during DNA replication, DNA recombination and DNA repair. This Saccharolobus islandicus (strain L.S.2.15 / Lassen #1) (Sulfolobus islandicus) protein is DNA ligase.